A 293-amino-acid chain; its full sequence is 5'-3' exoribonuclease Rnm (293 aa).

H17, H19, D24, H49, E76, H87, H202, D259, and H261 together coordinate Mn(2+).

The protein belongs to the PHP family. TrpH/YciV subfamily. Mn(2+) is required as a cofactor.

It carries out the reaction a ribonucleoside 3',5'-bisphosphate + H2O = a ribonucleoside 5'-phosphate + phosphate. Exoribonuclease that catalyzes the last steps of 5S, 16S and 23S rRNA 5'-end maturation. Removes 3 nucleotides (nt) from the 5' end of 5S, 16S and 23S rRNA precursors to generate the mature 5' ends. 5S and 23S rRNA maturation occurs more efficiently and accurately on ribosomal particles as compared to free RNA. Efficiently catalyzes the hydrolysis of the 3'-phosphate from 3',5'-bis-phosphonucleotides as well as the successive hydrolysis of 5'-phosphomononucleotides from the 5'-end of short pieces of RNA and DNA, with no specificity toward the identity of the nucleotide base. Is more efficient at hydrolyzing RNA oligonucleotides than DNA oligonucleotides. This enzyme can also hydrolyze annealed DNA duplexes, albeit at a catalytic efficiency lower than that of the corresponding single-stranded oligonucleotides. The polypeptide is 5'-3' exoribonuclease Rnm (Salmonella typhimurium (strain LT2 / SGSC1412 / ATCC 700720)).